The following is a 556-amino-acid chain: Insulin-like growth factor 2 mRNA-binding protein 2 (556 aa).

RRM domains follow at residues 3 to 76 (NKLY…YSVS) and 82 to 157 (RKIQ…YIPD). Position 11 is a phosphoserine (Ser11). Positions 156–188 (PDEEVSSPSPPQRAQRGDHSSREQGHAPGGTSQ) are disordered. Phosphoserine is present on residues Ser162 and Ser164. A compositionally biased stretch (basic and acidic residues) spans 170–180 (QRGDHSSREQG). KH domains are found at residues 193–258 (DFPL…CRMI), 274–341 (EIPL…EIEI), 384–449 (QEIV…QGRI), and 466–532 (KLEA…QRKI). Thr507 is modified (phosphothreonine).

It belongs to the RRM IMP/VICKZ family. In terms of assembly, can form homooligomers and heterooligomers with IGF2BP1 and IGF2BP3 in an RNA-dependent manner. Interacts with HNRPD. Interacts with IGF2BP1. Interacts with ELAVL1, DHX9, HNRNPU, MATR3 and PABPC1.

It localises to the nucleus. The protein resides in the cytoplasm. The protein localises to the P-body. Its subcellular location is the stress granule. In terms of biological role, RNA-binding factor that recruits target transcripts to cytoplasmic protein-RNA complexes (mRNPs). This transcript 'caging' into mRNPs allows mRNA transport and transient storage. It also modulates the rate and location at which target transcripts encounter the translational apparatus and shields them from endonuclease attacks or microRNA-mediated degradation. Preferentially binds to N6-methyladenosine (m6A)-containing mRNAs and increases their stability. Binds to the 5'-UTR of the insulin-like growth factor 2 (IGF2) mRNAs. Binding is isoform-specific. Binds to beta-actin/ACTB and MYC transcripts. Increases MYC mRNA stability by binding to the coding region instability determinant (CRD) and binding is enhanced by m6A-modification of the CRD. In Pongo abelii (Sumatran orangutan), this protein is Insulin-like growth factor 2 mRNA-binding protein 2 (IGF2BP2).